The sequence spans 381 residues: MSRLQFQLQATDGHARRGRLTFPRGTVETPAFMPVGTYGSVKGILPEHIRALGAEIILGNTFHLYLRPGLDVIGDHGGLHGFARWDGPILTDSGGFQVFSLAHRRKITEQGVTFSSPTDGARVFLGPEESMKIQKVLDSDIVMIFDECTPYPATEDLARRSMELSLRWAQRSRDAHDGLGNDAALFGIVQGGVHPDLRSRSLDGLQSIGFDGYAIGGLAVGEPEHERNAMLEHLHPRLPAECPRYLMGVGRPEDLVEGVARGVDMFDCVMPTRNARNGHYFTSFGTVRIRNAKYERDLDTIEPGCGCHACSSGYTRSYLRHLDRCNEMLAPMLGTLHNLWYYEKLMADMRAAIASGTFVEFRRSFYAARGATTPPLPGETS.

The active-site Proton acceptor is Asp-92. Substrate-binding positions include 92 to 96 (DSGGF), Asp-146, Gln-190, and Gly-217. The segment at 248–254 (GVGRPED) is RNA binding. Asp-267 (nucleophile) is an active-site residue. The segment at 272-276 (TRNAR) is RNA binding; important for wobble base 34 recognition. Residues Cys-305, Cys-307, Cys-310, and His-337 each contribute to the Zn(2+) site.

It belongs to the queuine tRNA-ribosyltransferase family. As to quaternary structure, homodimer. Within each dimer, one monomer is responsible for RNA recognition and catalysis, while the other monomer binds to the replacement base PreQ1. Zn(2+) serves as cofactor.

It carries out the reaction 7-aminomethyl-7-carbaguanine + guanosine(34) in tRNA = 7-aminomethyl-7-carbaguanosine(34) in tRNA + guanine. The protein operates within tRNA modification; tRNA-queuosine biosynthesis. Catalyzes the base-exchange of a guanine (G) residue with the queuine precursor 7-aminomethyl-7-deazaguanine (PreQ1) at position 34 (anticodon wobble position) in tRNAs with GU(N) anticodons (tRNA-Asp, -Asn, -His and -Tyr). Catalysis occurs through a double-displacement mechanism. The nucleophile active site attacks the C1' of nucleotide 34 to detach the guanine base from the RNA, forming a covalent enzyme-RNA intermediate. The proton acceptor active site deprotonates the incoming PreQ1, allowing a nucleophilic attack on the C1' of the ribose to form the product. After dissociation, two additional enzymatic reactions on the tRNA convert PreQ1 to queuine (Q), resulting in the hypermodified nucleoside queuosine (7-(((4,5-cis-dihydroxy-2-cyclopenten-1-yl)amino)methyl)-7-deazaguanosine). This Xanthomonas oryzae pv. oryzae (strain MAFF 311018) protein is Queuine tRNA-ribosyltransferase.